The chain runs to 351 residues: LIM/homeobox protein ceh-14 (351 aa).

LIM zinc-binding domains follow at residues 46–105 (AICS…KFGT) and 105–169 (TKCS…ARDK). Residues 180–239 (NKRPRTTISAKSLETLKQAYQTSSKPARHVREQLASETGLDMRVVQVWFQNRRAKEKRLK) constitute a DNA-binding region (homeobox). Positions 238–254 (LKKDAGRRWKSSNRAES) are enriched in basic and acidic residues. The interval 238 to 268 (LKKDAGRRWKSSNRAESDSNSPIESINGQSP) is disordered. Residues 255–268 (DSNSPIESINGQSP) show a composition bias toward polar residues.

In terms of assembly, interacts (via LIM zinc-binding domains 1 and 2) with lim-7 (via LID domain). May interact with itself. May interact with homeobox protein ceh-63. Expressed in the anterior AFDL/R sensory neurons and BDUL/R and ALA interneurons, and in PVT, PVQL/R, DVC, PVNL/R, PVWL/R, PVR, PHCL/R, PHAL/R and PHBL/R cells in the tail region.

The protein resides in the nucleus. Functionally, probable transcription factor, modulating expression of helix-loop-helix protein mbr-1 and homeobox protein ceh-63, perhaps acting in concert with ceh-63. Binds to a motif including the sequence 5'-CTAAT-3' in regulatory promoter elements. Confers thermosensory function to neurons. Required for correct AFD-mediated thermotaxis. In concert with homeobox protein ttx-1, perhaps as components in a complex, specifies identity of AFD neurons, acting by synergistically regulating receptor-type guanylyl cyclase gcy-8, gcy-18 and other genes. Involved in postembryonic differentiation of the ALA neuron, and regulation of genes that contribute to behavioral quiescence, a sleep-like behavior mediated by ALA. Regulates its own expression and also that of homeodomain ceh-17, together forming an autoregulatory loop in the ALA neuron. Required for initial pathfinding of the ALA axons, but largely dispensable for axon migration. Involved in regulating postembryonic axon maintenance in the ventral nerve cord, acting in concert with LIM homeobox protein lim-6, via modulation of expression of immunoglobulin domain zig genes in the interneuron PVT. Plays a role in controlling the peptidergic identity of the BDU neurons, regulating expression of flp-10, nlp-1, and nlp-15, thereby modulating the harsh touch response. The sequence is that of LIM/homeobox protein ceh-14 (ceh-14) from Caenorhabditis elegans.